A 1372-amino-acid polypeptide reads, in one-letter code: DNA-directed RNA polymerase subunit beta (1372 aa).

It belongs to the RNA polymerase beta chain family. The RNAP catalytic core consists of 2 alpha, 1 beta, 1 beta' and 1 omega subunit. When a sigma factor is associated with the core the holoenzyme is formed, which can initiate transcription.

It catalyses the reaction RNA(n) + a ribonucleoside 5'-triphosphate = RNA(n+1) + diphosphate. In terms of biological role, DNA-dependent RNA polymerase catalyzes the transcription of DNA into RNA using the four ribonucleoside triphosphates as substrates. This chain is DNA-directed RNA polymerase subunit beta, found in Psychrobacter arcticus (strain DSM 17307 / VKM B-2377 / 273-4).